The primary structure comprises 678 residues: Elongation factor G 2 (678 aa).

Residues 4–278 (QKLRNIGIIA…AVVDYLPSPQ (275 aa)) enclose the tr-type G domain. GTP-binding positions include 13–20 (AHVDAGKT), 77–81 (DTPGH), and 131–134 (NKMD).

Belongs to the TRAFAC class translation factor GTPase superfamily. Classic translation factor GTPase family. EF-G/EF-2 subfamily.

It is found in the cytoplasm. Functionally, catalyzes the GTP-dependent ribosomal translocation step during translation elongation. During this step, the ribosome changes from the pre-translocational (PRE) to the post-translocational (POST) state as the newly formed A-site-bound peptidyl-tRNA and P-site-bound deacylated tRNA move to the P and E sites, respectively. Catalyzes the coordinated movement of the two tRNA molecules, the mRNA and conformational changes in the ribosome. This chain is Elongation factor G 2, found in Hahella chejuensis (strain KCTC 2396).